Here is a 99-residue protein sequence, read N- to C-terminus: Protein Frey (99 aa).

A helical transmembrane segment spans residues 7-29; the sequence is GALYPRAGLSLFLLYLVLAAVLL. The interval 65–88 is disordered; sequence PKHPWPRGPRPLLSRAQQRKRDGP.

As to quaternary structure, interacts with SPPL2C (via active sites); the interaction stabilizes FREY1 protein and inhibits SPPL2C proteolytic activity. Interacts with IZUMO1; the interaction retains IZUMO1 at the endoplasmic reticulum membrane and coordinates IZUMO1 complex assembly.

Its subcellular location is the endoplasmic reticulum membrane. Functionally, key regulator for male fertility expressed transiently in round spermatids where it recruits IZUMO1 at the endoplasmic reticulum (ER) membrane and coordinates the oolemmal binding multimeric complex (IZUMO1 complex) assembly. Upon complete assembly of the IZUMO1 complex, its ER retention is released, facilitating IZUMO1 complex export to the acrosome. Through the interaction with SPPL2C, inhibits its intramembrane protease activity directly accessing the catalytic center of an I-CLiP. The chain is Protein Frey from Ailuropoda melanoleuca (Giant panda).